Here is a 311-residue protein sequence, read N- to C-terminus: MRGAARAAWGRAGQPWPRPPAPGPPPPPLPLLLLLLAGLLGGAGAQYSSDRCSWKGSGLTHEAHRKEVEQVYLRCAAGAVEWMYPTGALIVNLRPNTFSPARHLTVCIRSFTDSSGANIYLEKTGELRLLVPDGDGRPGRVQCFGLEQGGLFVEATPQQDIGRRTTGFQYELVRRHRASDLHELSAPCRPCSDTEVLLAVCTSDFAVRGSIQQVTHEPERQDSAIHLRVSRLYRQKSRVFEPVPEGDGHWQGRVRTLLECGVRPGHGDFLFTGHMHFGEARLGCAPRFKDFQRMYRDAQERGLNPCEVGTD.

The span at 1-13 (MRGAARAAWGRAG) shows a compositional bias: low complexity. The segment at 1-24 (MRGAARAAWGRAGQPWPRPPAPGP) is disordered. A signal peptide spans 1–45 (MRGAARAAWGRAGQPWPRPPAPGPPPPPLPLLLLLLAGLLGGAGA). Intrachain disulfides connect Cys52/Cys75, Cys107/Cys143, Cys188/Cys260, Cys191/Cys284, and Cys201/Cys306.

This sequence belongs to the meteorin family. As to expression, highly expressed in the skeletal muscle, in subcutaneous adipose tissue, epididymal white adipose tissue depots and heart. Also expressed in brown adipose tissues and kidney.

It is found in the secreted. In terms of biological role, hormone induced following exercise or cold exposure that promotes energy expenditure. Induced either in the skeletal muscle after exercise or in adipose tissue following cold exposure and is present in the circulation. Able to stimulate energy expenditure associated with the browning of the white fat depots and improves glucose tolerance. Does not promote an increase in a thermogenic gene program via direct action on adipocytes, but acts by stimulating several immune cell subtypes to enter the adipose tissue and activate their prothermogenic actions. Stimulates an eosinophil-dependent increase in IL4 expression and promotes alternative activation of adipose tissue macrophages, which are required for the increased expression of the thermogenic and anti-inflammatory gene programs in fat. Required for some cold-induced thermogenic responses, suggesting a role in metabolic adaptations to cold temperatures. The polypeptide is Meteorin-like protein (METRNL) (Homo sapiens (Human)).